Consider the following 302-residue polypeptide: Zygote arrest protein 2.S (302 aa).

Disordered stretches follow at residues 15–46, 88–117, and 138–195; these read YGGN…SEPP, VDTG…PTDC, and LPQG…EPNK. A compositionally biased stretch (basic and acidic residues) spans 159–178; sequence LKDRGPSPEEKEPETKEALE. A 3CxxC-type zinc finger spans residues 203 to 288; that stretch reads QKYGYFHCKD…QELCGRCKNK (86 aa).

It belongs to the ZAR1 family. In terms of tissue distribution, oocyte-specific.

It is found in the cytoplasm. The protein resides in the cytoplasmic ribonucleoprotein granule. Its function is as follows. mRNA-binding protein required for maternal mRNA storage, translation and degradation during oocyte maturation. Probably promotes formation of some phase-separated membraneless compartment that stores maternal mRNAs in oocytes: acts by undergoing liquid-liquid phase separation upon binding to maternal mRNAs. Binds to the 3'-UTR of maternal mRNAs, inhibiting their translation. In Xenopus laevis (African clawed frog), this protein is Zygote arrest protein 2.S.